Here is a 105-residue protein sequence, read N- to C-terminus: Hydrogen cyanide synthase subunit HcnA (105 aa).

The region spanning Ala-16–Arg-97 is the 2Fe-2S ferredoxin-type domain. [2Fe-2S] cluster is bound by residues Cys-60, Cys-65, Cys-68, and Cys-81.

Heterotrimer of HcnA, HcnB and HcnC.

It is found in the cell membrane. The enzyme catalyses glycine + 2 A = hydrogen cyanide + 2 AH2 + CO2. Its function is as follows. A three-component membrane-bound flavoenzyme that catalyzes the formation of hydrogen cyanide, a secondary metabolite, by transfer of electrons to a cyanide-resistant branch of the aerobic respiratory chain. Contributes to suppression of black root rot of tobacco. The chain is Hydrogen cyanide synthase subunit HcnA from Pseudomonas protegens (strain DSM 19095 / LMG 27888 / CFBP 6595 / CHA0).